The sequence spans 263 residues: tRNA pseudouridine synthase A (263 aa).

Aspartate 73 functions as the Nucleophile in the catalytic mechanism. Tyrosine 131 provides a ligand contact to substrate.

It belongs to the tRNA pseudouridine synthase TruA family. In terms of assembly, homodimer.

It carries out the reaction uridine(38/39/40) in tRNA = pseudouridine(38/39/40) in tRNA. Functionally, formation of pseudouridine at positions 38, 39 and 40 in the anticodon stem and loop of transfer RNAs. The chain is tRNA pseudouridine synthase A from Mycoplasmoides gallisepticum (strain R(low / passage 15 / clone 2)) (Mycoplasma gallisepticum).